The sequence spans 134 residues: Interleukin-5 (134 aa).

The N-terminal stretch at 1-19 (MRMLLHLSLLALGAAYVYA) is a signal peptide. Residue threonine 22 is glycosylated (O-linked (GalNAc...) threonine). An N-linked (GlcNAc...) asparagine glycan is attached at asparagine 47.

This sequence belongs to the IL-5 family. As to quaternary structure, homodimer; disulfide-linked. Interacts with IL5RA. Interacts with CSF2RB. As to expression, present in peripheral blood mononuclear cells.

Its subcellular location is the secreted. Homodimeric cytokine expressed predominantly by T-lymphocytes and NK cells that plays an important role in the survival, differentiation, and chemotaxis of eosinophils. Also acts on activated and resting B-cells to induce immunoglobulin production, growth, and differentiation. Mechanistically, exerts its biological effects through a receptor composed of IL5RA subunit and the cytokine receptor common subunit beta/CSF2RB. Binding to the receptor leads to activation of various kinases including LYN, SYK and JAK2 and thereby propagates signals through the RAS-MAPK and JAK-STAT5 pathways respectively. The polypeptide is Interleukin-5 (IL5) (Homo sapiens (Human)).